Reading from the N-terminus, the 361-residue chain is Probable mannose-1-phosphate guanylyltransferase 2 (361 aa).

Positions 6 and 7 each coordinate GDP-alpha-D-mannose. 5 residues coordinate diphosphate: Gly9, Gly11, Thr12, Arg13, and Lys23. Positions 85, 109, 111, 146, and 173 each coordinate GDP-alpha-D-mannose.

It belongs to the transferase hexapeptide repeat family.

The catalysed reaction is alpha-D-mannose 1-phosphate + GTP + H(+) = GDP-alpha-D-mannose + diphosphate. It functions in the pathway nucleotide-sugar biosynthesis; GDP-alpha-D-mannose biosynthesis; GDP-alpha-D-mannose from alpha-D-mannose 1-phosphate (GTP route): step 1/1. Its function is as follows. Catalyzes a reaction of the Smirnoff-Wheeler pathway, the major route to ascorbate biosynthesis in plants. In Oryza sativa subsp. japonica (Rice), this protein is Probable mannose-1-phosphate guanylyltransferase 2.